A 241-amino-acid polypeptide reads, in one-letter code: MLTKFLSLLLLLLLLGCAFCNSDGSQSLHMLQISYFPDPYHGRHQGNASLGKLLTHTLEGPSNNVTILQLQDWQDPDSWARTESGLKIYLSQFNSLVQLIYRERKNDVVFPLTVSCSVGCELPPEEGSEPHVFFDVAVNGSAFVSFQPKTAIWVTGSQEPSEAINFTLKQLNTYNRTRYELQEFLQDTCVQYLENHITTQNTKGSQTGRSYTSLVLGILMGCFIIAGVAVGIFLCTGGRRC.

Residues 1 to 20 (MLTKFLSLLLLLLLLGCAFC) form the signal peptide. Residues 21-213 (NSDGSQSLHM…GSQTGRSYTS (193 aa)) lie on the Extracellular side of the membrane. Asn-47, Asn-64, Asn-139, Asn-165, and Asn-175 each carry an N-linked (GlcNAc...) asparagine glycan. Residues 214-234 (LVLGILMGCFIIAGVAVGIFL) traverse the membrane as a helical segment. The Cytoplasmic portion of the chain corresponds to 235 to 241 (CTGGRRC).

The protein resides in the membrane. Its function is as follows. Binds activated protein C. Enhances protein C activation by the thrombin-thrombomodulin complex; plays a role in the protein C pathway controlling blood coagulation. The sequence is that of Endothelial protein C receptor (Procr) from Rattus norvegicus (Rat).